Reading from the N-terminus, the 502-residue chain is Glutamate--tRNA ligase (502 aa).

The short motif at 12–22 is the 'HIGH' region element; it reads PSPTGYLHVGG. The short motif at 259–263 is the 'KMSKS' region element; that stretch reads KLSKR. Lys262 provides a ligand contact to ATP.

This sequence belongs to the class-I aminoacyl-tRNA synthetase family. Glutamate--tRNA ligase type 1 subfamily. In terms of assembly, monomer.

It localises to the cytoplasm. The catalysed reaction is tRNA(Glu) + L-glutamate + ATP = L-glutamyl-tRNA(Glu) + AMP + diphosphate. In terms of biological role, catalyzes the attachment of glutamate to tRNA(Glu) in a two-step reaction: glutamate is first activated by ATP to form Glu-AMP and then transferred to the acceptor end of tRNA(Glu). This chain is Glutamate--tRNA ligase, found in Chlorobium chlorochromatii (strain CaD3).